The sequence spans 150 residues: Large ribosomal subunit protein bL9 (150 aa).

Belongs to the bacterial ribosomal protein bL9 family.

Functionally, binds to the 23S rRNA. The protein is Large ribosomal subunit protein bL9 of Idiomarina loihiensis (strain ATCC BAA-735 / DSM 15497 / L2-TR).